The primary structure comprises 255 residues: tRNA (guanine-N(1)-)-methyltransferase (255 aa).

Residues Gly-113 and 133 to 138 (IGDYVL) contribute to the S-adenosyl-L-methionine site.

This sequence belongs to the RNA methyltransferase TrmD family. In terms of assembly, homodimer.

Its subcellular location is the cytoplasm. The catalysed reaction is guanosine(37) in tRNA + S-adenosyl-L-methionine = N(1)-methylguanosine(37) in tRNA + S-adenosyl-L-homocysteine + H(+). Specifically methylates guanosine-37 in various tRNAs. This is tRNA (guanine-N(1)-)-methyltransferase from Escherichia fergusonii (strain ATCC 35469 / DSM 13698 / CCUG 18766 / IAM 14443 / JCM 21226 / LMG 7866 / NBRC 102419 / NCTC 12128 / CDC 0568-73).